Reading from the N-terminus, the 271-residue chain is ATP synthase subunit a (271 aa).

The next 5 helical transmembrane spans lie at 38–58 (FWTLNIDSMFFSVVLGLLFLA), 100–120 (VIAPLALTVFVWVFLMNLMDL), 146–166 (DVNITLSMALGVFILIIFYSI), 211–231 (LFGNMYAGELIFILIAGLLPW), and 242–262 (AIFHILIITLQAFIFMVLTIV).

The protein belongs to the ATPase A chain family. F-type ATPases have 2 components, CF(1) - the catalytic core - and CF(0) - the membrane proton channel. CF(1) has five subunits: alpha(3), beta(3), gamma(1), delta(1), epsilon(1). CF(0) has three main subunits: a(1), b(2) and c(9-12). The alpha and beta chains form an alternating ring which encloses part of the gamma chain. CF(1) is attached to CF(0) by a central stalk formed by the gamma and epsilon chains, while a peripheral stalk is formed by the delta and b chains.

The protein resides in the cell inner membrane. Key component of the proton channel; it plays a direct role in the translocation of protons across the membrane. The polypeptide is ATP synthase subunit a (Klebsiella pneumoniae (strain 342)).